The sequence spans 469 residues: Cysteine protease ATG4 (469 aa).

The disordered stretch occupies residues 48-99 (KNIKADDHHPQTPPSVLKAETETQEAHDTAQPPNPPTNAPDTPPDSISSSFS). Over residues 66–75 (AETETQEAHD) the composition is skewed to basic and acidic residues. Residues 79-90 (PPNPPTNAPDTP) show a composition bias toward pro residues. Catalysis depends on C172, which acts as the Nucleophile. Residues D362 and H364 contribute to the active site. A disordered region spans residues 443 to 469 (GSSEGRESAIDEVETLSDDDTDTIHEA). The segment covering 452-463 (IDEVETLSDDDT) has biased composition (acidic residues).

It belongs to the peptidase C54 family. Interacts with ATG8.

It localises to the cytoplasm. Its subcellular location is the nucleus. The protein localises to the preautophagosomal structure. It carries out the reaction [protein]-C-terminal L-amino acid-glycyl-phosphatidylethanolamide + H2O = [protein]-C-terminal L-amino acid-glycine + a 1,2-diacyl-sn-glycero-3-phosphoethanolamine. Its function is as follows. Cysteine protease that plays a key role in cytoplasm to vacuole transport (Cvt) and autophagy by mediating both proteolytic activation and delipidation of ATG8. Required for selective autophagic degradation of the nucleus (nucleophagy) as well as for mitophagy which contributes to regulate mitochondrial quantity and quality by eliminating the mitochondria to a basal level to fulfill cellular energy requirements and preventing excess ROS production. The protease activity is required for proteolytic activation of ATG8: cleaves the C-terminal amino acid of ATG8 to reveal a C-terminal glycine. ATG8 ubiquitin-like activity requires the exposure of the glycine at the C-terminus for its conjugation to phosphatidylethanolamine (PE) and its insertion to membranes, which is necessary for autophagy. The ATG8-PE conjugate mediates tethering between adjacent membranes and stimulates membrane hemifusion, leading to expansion of the autophagosomal membrane during autophagy. In addition to the protease activity, also catalyzes deconjugation of PE-conjugated forms of ATG8 during macroautophagy: ATG8 delipidation is required to release the protein from membranes, which facilitates multiple events during macroautophagy, and especially for efficient autophagosome biogenesis, the assembly of ATG9-containing tubulovesicular clusters into phagophores/autophagosomes, and for the disassembly of PAS-associated ATG components. ATG8 delipidation by ATG4 also recycles ATG8-PE generated on inappropriate membranes to maintain a reservoir of unlipidated ATG8 that is required for autophagosome formation at the PAS. Autophagy is required for proper vegetative growth, asexual/sexual reproduction, and full virulence. Autophagy is particularly involved in the biosynthesis of deoxynivalenol (DON), an important virulence determinant. The chain is Cysteine protease ATG4 from Gibberella zeae (strain ATCC MYA-4620 / CBS 123657 / FGSC 9075 / NRRL 31084 / PH-1) (Wheat head blight fungus).